The primary structure comprises 516 residues: MRASLLAFSLAAAVAGGQQAGTLTAKRHPSLTWQKCTRGGCPTLNTTMVLDANWRWTHATSGSTKCYTGNKWQATLCPDGKSCAANCALDGADYTGTYGITGSGWSLTLQFVTDNVGARAYLMADDTQYQMLELLNQELWFDVDMSNIPCGLNGALYLSAMDADGGMRKYPTNKAGAKYATGYCDAQCPRDLKYINGIANVEGWTPSTNDANGIGDHGSCCSEMDIWEANKVSTAFTPHPCTTIEQHMCEGDSCGGTYSDDRYGVLCDADGCDFNSYRMGNTTFYGEGKTVDTSSKFTVVTQFIKDSAGDLAEIKAFYVQNGKVIENSQSNVDGVSGNSITQSFCKSQKTAFGDIDDFNKKGGLKQMGKALAQAMVLVMSIWDDHAANMLWLDSTYPVPKVPGAYRGSGPTTSGVPAEVDANAPNSKVAFSNIKFGHLGISPFSGGSSGTPPSNPSSSASPTSSTAKPSSTSTASNPSGTGAAHWAQCGGIGFSGPTTCPEPYTCAKDHDIYSQCV.

The signal sequence occupies residues 1–17; the sequence is MRASLLAFSLAAAVAGG. The interval 18 to 445 is catalytic; the sequence is QQAGTLTAKR…GHLGISPFSG (428 aa). Asn45 carries an N-linked (GlcNAc...) asparagine glycan. The active-site Nucleophile is the Glu223. Glu228 acts as the Proton donor in catalysis. An N-linked (GlcNAc...) asparagine glycan is attached at Asn281. The interval 444–481 is disordered; it reads SGGSSGTPPSNPSSSASPTSSTAKPSSTSTASNPSGTG. Residues 446 to 480 form a linker region; sequence GSSGTPPSNPSSSASPTSSTAKPSSTSTASNPSGT. A compositionally biased stretch (low complexity) spans 449–481; the sequence is GTPPSNPSSSASPTSSTAKPSSTSTASNPSGTG. The CBM1 domain maps to 480–516; it reads TGAAHWAQCGGIGFSGPTTCPEPYTCAKDHDIYSQCV. Cystine bridges form between Cys488/Cys505 and Cys499/Cys515.

It belongs to the glycosyl hydrolase 7 (cellulase C) family.

The protein resides in the secreted. The enzyme catalyses Hydrolysis of (1-&gt;4)-beta-D-glucosidic linkages in cellulose and cellotetraose, releasing cellobiose from the non-reducing ends of the chains.. The sequence is that of Exoglucanase 1 (cbh-1) from Neurospora crassa (strain ATCC 24698 / 74-OR23-1A / CBS 708.71 / DSM 1257 / FGSC 987).